The sequence spans 46 residues: Small polypeptide DEVIL 5 (46 aa).

The helical transmembrane segment at Val-8 to Val-24 threads the bilayer. Residues Met-15–Asp-46 form a required for DVL/RTFL small polypeptide activity region.

It belongs to the DVL/RTFL small polypeptides family. As to expression, mostly expressed in roots and flowers, and, to a lower extent, in leaves and stems.

It localises to the cell membrane. Its function is as follows. Small polypeptide acting as a regulatory molecule which coordinates cellular responses required for differentiation, growth and development, including leaves shape, pedicule elongation, inflorescence organization and fruit maturation, probably by restricting polar cell proliferation in lateral organs and coordinating socket cell recruitment and differentiation at trichome sites. This Arabidopsis thaliana (Mouse-ear cress) protein is Small polypeptide DEVIL 5.